A 377-amino-acid polypeptide reads, in one-letter code: Succinyl-diaminopimelate desuccinylase (377 aa).

His-68 lines the Zn(2+) pocket. Residue Asp-70 is part of the active site. Asp-101 is a Zn(2+) binding site. Glu-135 (proton acceptor) is an active-site residue. 3 residues coordinate Zn(2+): Glu-136, Glu-164, and His-350.

Belongs to the peptidase M20A family. DapE subfamily. In terms of assembly, homodimer. Zn(2+) serves as cofactor. The cofactor is Co(2+).

The enzyme catalyses N-succinyl-(2S,6S)-2,6-diaminopimelate + H2O = (2S,6S)-2,6-diaminopimelate + succinate. The protein operates within amino-acid biosynthesis; L-lysine biosynthesis via DAP pathway; LL-2,6-diaminopimelate from (S)-tetrahydrodipicolinate (succinylase route): step 3/3. Catalyzes the hydrolysis of N-succinyl-L,L-diaminopimelic acid (SDAP), forming succinate and LL-2,6-diaminopimelate (DAP), an intermediate involved in the bacterial biosynthesis of lysine and meso-diaminopimelic acid, an essential component of bacterial cell walls. The polypeptide is Succinyl-diaminopimelate desuccinylase (Psychromonas ingrahamii (strain DSM 17664 / CCUG 51855 / 37)).